Consider the following 343-residue polypeptide: CRISPR-associated endonuclease Cas1 1 (343 aa).

Residues Glu166, His234, and Glu249 each contribute to the Mn(2+) site.

Belongs to the CRISPR-associated endonuclease Cas1 family. Homodimer, forms a heterotetramer with a Cas2 homodimer. Mg(2+) is required as a cofactor. Requires Mn(2+) as cofactor.

CRISPR (clustered regularly interspaced short palindromic repeat), is an adaptive immune system that provides protection against mobile genetic elements (viruses, transposable elements and conjugative plasmids). CRISPR clusters contain spacers, sequences complementary to antecedent mobile elements, and target invading nucleic acids. CRISPR clusters are transcribed and processed into CRISPR RNA (crRNA). Acts as a dsDNA endonuclease. Involved in the integration of spacer DNA into the CRISPR cassette. In Chlorobaculum tepidum (strain ATCC 49652 / DSM 12025 / NBRC 103806 / TLS) (Chlorobium tepidum), this protein is CRISPR-associated endonuclease Cas1 1.